A 315-amino-acid chain; its full sequence is Replication factor C small subunit (315 aa).

An ATP-binding site is contributed by 43–50; it reads GSPGVGKT.

Belongs to the activator 1 small subunits family. RfcS subfamily. Heteromultimer composed of small subunits (RfcS) and large subunits (RfcL).

Its function is as follows. Part of the RFC clamp loader complex which loads the PCNA sliding clamp onto DNA. The chain is Replication factor C small subunit from Methanococcus maripaludis (strain DSM 14266 / JCM 13030 / NBRC 101832 / S2 / LL).